A 1211-amino-acid polypeptide reads, in one-letter code: DNA polymerase beta (1211 aa).

A run of 4 repeats spans residues 1074 to 1077 (KPAG), 1078 to 1081 (KPAG), 1082 to 1085 (NPAG), and 1086 to 1089 (NPAG). The 4 X 4 AA tandem repeats of [NK]-[P]-A-G stretch occupies residues 1074–1089 (KPAGKPAGNPAGNPAG).

It belongs to the DNA polymerase type-B family.

The enzyme catalyses DNA(n) + a 2'-deoxyribonucleoside 5'-triphosphate = DNA(n+1) + diphosphate. Its function is as follows. DNA-directed DNA polymerase involved in viral DNA replication. The sequence is that of DNA polymerase beta (DPOL) from African swine fever virus (strain Badajoz 1971 Vero-adapted) (Ba71V).